The primary structure comprises 654 residues: Meiotically up-regulated gene 24 protein (654 aa).

In terms of domain architecture, RRM 1 spans 299–355; it reads RNVFIGNLPSSYHEKEIEEAFGKFGKIEHIKILSKKNIAFVHFLNIRDAIKVVRTLS. The segment at 383–404 is disordered; sequence SCFTSKQNPDTTSDRCRQQESK. Over residues 384–393 the composition is skewed to polar residues; it reads CFTSKQNPDT. Over residues 394–404 the composition is skewed to basic and acidic residues; sequence TSDRCRQQESK. RRM domains are found at residues 409 to 482 and 500 to 571; these read RTVF…WGKE and RNVY…YAPD.

Its subcellular location is the cytoplasm. Its function is as follows. Has a role in meiosis. The sequence is that of Meiotically up-regulated gene 24 protein (mug24) from Schizosaccharomyces pombe (strain 972 / ATCC 24843) (Fission yeast).